The primary structure comprises 467 residues: Cytochrome P450 85A3 (467 aa).

A helical transmembrane segment spans residues 2-22; that stretch reads AIFLIIFVVFFGFCILSTPLF. Cys-417 is a heme binding site.

This sequence belongs to the cytochrome P450 family. Requires heme as cofactor. As to expression, expressed in fruits.

It localises to the membrane. It catalyses the reaction 6-deoxocastasterone + reduced [NADPH--hemoprotein reductase] + O2 = 6alpha-hydroxycastasterone + oxidized [NADPH--hemoprotein reductase] + H2O + H(+). The enzyme catalyses 6alpha-hydroxycastasterone + reduced [NADPH--hemoprotein reductase] + O2 = castasterone + oxidized [NADPH--hemoprotein reductase] + 2 H2O + H(+). It carries out the reaction castasterone + reduced [NADPH--hemoprotein reductase] + O2 = brassinolide + oxidized [NADPH--hemoprotein reductase] + H2O + H(+). The catalysed reaction is 6-deoxocastasterone + 2 reduced [NADPH--hemoprotein reductase] + 2 O2 = castasterone + 2 oxidized [NADPH--hemoprotein reductase] + 3 H2O + 2 H(+). The protein operates within plant hormone biosynthesis; brassinosteroid biosynthesis. Catalyzes the C6-oxidation step in brassinosteroids biosynthesis. Converts 6-deoxocastasterone (6-deoxoCS) to castasterone (CS), and castasterone (CS) to brassinolide (BL). This is Cytochrome P450 85A3 from Solanum lycopersicum (Tomato).